Consider the following 288-residue polypeptide: MVAKIIDGKTIAQQVRNEVAGLVQQRLAAGKRAPGLAVVLVGENPASQIYVSSKRRACEEVGFLSRSYDLPASTSEAQLLELITQLNDDAEIDGILVQLPLPAGIDNTKVLEHISPAKDVDGFHPYNVGRLCQRAPTLRPCTPRGIVTLLERYQIDTFGLNAVVVGASNIVGRPMSMELLLAGCTTTVTHRFTKNLRQHIENADLLVVAVGKPGFIPGDWIKPGAIVIDVGINRLESGKVVGDVDFDLASTRASWITPVPGGVGPMTVATLIQNTLQACENNDNGVSA.

NADP(+) is bound by residues 166 to 168 and Ile232; that span reads GAS.

It belongs to the tetrahydrofolate dehydrogenase/cyclohydrolase family. Homodimer.

The catalysed reaction is (6R)-5,10-methylene-5,6,7,8-tetrahydrofolate + NADP(+) = (6R)-5,10-methenyltetrahydrofolate + NADPH. It catalyses the reaction (6R)-5,10-methenyltetrahydrofolate + H2O = (6R)-10-formyltetrahydrofolate + H(+). It participates in one-carbon metabolism; tetrahydrofolate interconversion. Catalyzes the oxidation of 5,10-methylenetetrahydrofolate to 5,10-methenyltetrahydrofolate and then the hydrolysis of 5,10-methenyltetrahydrofolate to 10-formyltetrahydrofolate. The sequence is that of Bifunctional protein FolD from Erwinia tasmaniensis (strain DSM 17950 / CFBP 7177 / CIP 109463 / NCPPB 4357 / Et1/99).